Consider the following 435-residue polypeptide: Xylose isomerase (435 aa).

Catalysis depends on residues histidine 100 and aspartate 103. Positions 231, 267, 270, 295, 306, 308, and 338 each coordinate Mg(2+).

This sequence belongs to the xylose isomerase family. In terms of assembly, homotetramer. Requires Mg(2+) as cofactor.

The protein resides in the cytoplasm. The catalysed reaction is alpha-D-xylose = alpha-D-xylulofuranose. This chain is Xylose isomerase, found in Brucella suis (strain ATCC 23445 / NCTC 10510).